We begin with the raw amino-acid sequence, 271 residues long: Phosphatidylglycerol--prolipoprotein diacylglyceryl transferase (271 aa).

7 helical membrane passes run 10–30, 56–76, 92–112, 120–140, 174–194, 202–222, and 237–257; these read VALA…LVGI, LVFW…VLFY, WKGG…ALWF, FFQL…AGRI, PSQL…LWLF, MAVS…VEFV, and LTMG…LIWL. Residue R139 participates in a 1,2-diacyl-sn-glycero-3-phospho-(1'-sn-glycerol) binding.

Belongs to the Lgt family.

It localises to the cell inner membrane. The catalysed reaction is L-cysteinyl-[prolipoprotein] + a 1,2-diacyl-sn-glycero-3-phospho-(1'-sn-glycerol) = an S-1,2-diacyl-sn-glyceryl-L-cysteinyl-[prolipoprotein] + sn-glycerol 1-phosphate + H(+). Its pathway is protein modification; lipoprotein biosynthesis (diacylglyceryl transfer). In terms of biological role, catalyzes the transfer of the diacylglyceryl group from phosphatidylglycerol to the sulfhydryl group of the N-terminal cysteine of a prolipoprotein, the first step in the formation of mature lipoproteins. The polypeptide is Phosphatidylglycerol--prolipoprotein diacylglyceryl transferase (Pseudomonas fluorescens (strain Pf0-1)).